A 124-amino-acid polypeptide reads, in one-letter code: Ribonuclease pancreatic (124 aa).

A compositionally biased stretch (basic and acidic residues) spans 1–13; that stretch reads KETAAAKFERQHM. Residues 1–24 are disordered; it reads KETAAAKFERQHMDSSTSSASSSN. Lys7 and Arg10 together coordinate substrate. The active-site Proton acceptor is the His12. 4 cysteine pairs are disulfide-bonded: Cys26/Cys84, Cys40/Cys95, Cys58/Cys110, and Cys65/Cys72. Substrate-binding positions include 41–45, Lys66, and Arg85; that span reads KPVBT. His119 serves as the catalytic Proton donor.

The protein belongs to the pancreatic ribonuclease family. As to quaternary structure, monomer. Interacts with and forms tight 1:1 complexes with RNH1. Dimerization of two such complexes may occur. Interaction with RNH1 inhibits this protein. In terms of tissue distribution, pancreas.

Its subcellular location is the secreted. The enzyme catalyses an [RNA] containing cytidine + H2O = an [RNA]-3'-cytidine-3'-phosphate + a 5'-hydroxy-ribonucleotide-3'-[RNA].. It catalyses the reaction an [RNA] containing uridine + H2O = an [RNA]-3'-uridine-3'-phosphate + a 5'-hydroxy-ribonucleotide-3'-[RNA].. In terms of biological role, endonuclease that catalyzes the cleavage of RNA on the 3' side of pyrimidine nucleotides. Acts on single-stranded and double-stranded RNA. The polypeptide is Ribonuclease pancreatic (RNASE1) (Boselaphus tragocamelus (Nilgai)).